Reading from the N-terminus, the 469-residue chain is 3-isopropylmalate dehydratase large subunit (469 aa).

[4Fe-4S] cluster is bound by residues Cys350, Cys410, and Cys413.

It belongs to the aconitase/IPM isomerase family. LeuC type 1 subfamily. As to quaternary structure, heterodimer of LeuC and LeuD. [4Fe-4S] cluster serves as cofactor.

The enzyme catalyses (2R,3S)-3-isopropylmalate = (2S)-2-isopropylmalate. Its pathway is amino-acid biosynthesis; L-leucine biosynthesis; L-leucine from 3-methyl-2-oxobutanoate: step 2/4. Its function is as follows. Catalyzes the isomerization between 2-isopropylmalate and 3-isopropylmalate, via the formation of 2-isopropylmaleate. The chain is 3-isopropylmalate dehydratase large subunit from Brucella anthropi (strain ATCC 49188 / DSM 6882 / CCUG 24695 / JCM 21032 / LMG 3331 / NBRC 15819 / NCTC 12168 / Alc 37) (Ochrobactrum anthropi).